The primary structure comprises 161 residues: Cyclic pyranopterin monophosphate synthase (161 aa).

Substrate-binding positions include 75–77 (LCH) and 113–114 (ME). Asp128 is an active-site residue.

The protein belongs to the MoaC family. Homohexamer; trimer of dimers.

The catalysed reaction is (8S)-3',8-cyclo-7,8-dihydroguanosine 5'-triphosphate = cyclic pyranopterin phosphate + diphosphate. It participates in cofactor biosynthesis; molybdopterin biosynthesis. Functionally, catalyzes the conversion of (8S)-3',8-cyclo-7,8-dihydroguanosine 5'-triphosphate to cyclic pyranopterin monophosphate (cPMP). The polypeptide is Cyclic pyranopterin monophosphate synthase (Shigella sonnei (strain Ss046)).